Reading from the N-terminus, the 834-residue chain is ATP-dependent RNA helicase ddx23 (834 aa).

Disordered regions lie at residues 1-245 (MDPP…TQFS) and 322-371 (FGGY…GKQI). Residues 10-25 (SKRDTKKKDEVNKEQP) are compositionally biased toward basic and acidic residues. The segment covering 42 to 54 (SNPTQEEPTNTLQ) has biased composition (polar residues). Basic and acidic residues-rich tracts occupy residues 70 to 110 (GLKE…DYRD), 117 to 164 (GRDR…RRDG), 171 to 205 (RRRDERRENSGRRDYRDNDRRDDRRDNGRYGRDND), and 231 to 245 (DIHKDRIKRDTTQFS). The span at 328–362 (NNNNNGNHYNGNIYNNNNNNNNNNNNNNNINNNNN) shows a compositional bias: low complexity. The Q motif motif lies at 413–441 (RTWQESNLPREILEAIRQLGYEKPSPIQM). Residues 444–643 (IPISLTGRDI…KKYLRRPCTI (200 aa)) form the Helicase ATP-binding domain. 457-464 (AETGSGKT) serves as a coordination point for ATP. Positions 570–573 (DEAD) match the DEAD box motif. Residues 654-815 (RIRQTVIFVK…IVPIELLKHP (162 aa)) enclose the Helicase C-terminal domain. The interval 813–834 (KHPSSQQKHGSSKDHNKSVIFK) is disordered. Residues 823–834 (SSKDHNKSVIFK) show a composition bias toward basic and acidic residues.

The protein belongs to the DEAD box helicase family. DDX23/PRP28 subfamily.

Its subcellular location is the cytoplasm. The protein resides in the nucleus. It catalyses the reaction ATP + H2O = ADP + phosphate + H(+). Its function is as follows. Probable ATP-dependent RNA helicase which may be involved in mRNA splicing. This chain is ATP-dependent RNA helicase ddx23 (helB2), found in Dictyostelium discoideum (Social amoeba).